Here is a 306-residue protein sequence, read N- to C-terminus: WUSCHEL-related homeobox 13 (306 aa).

The segment covering 1 to 11 (MMALGVPPPPS) has biased composition (pro residues). Disordered stretches follow at residues 1 to 20 (MMAL…GPLR), 103 to 142 (PRSH…PRPE), and 190 to 276 (SRSK…ARAT). Over residues 126–142 (GEERVPDPKPRRNPRPE) the composition is skewed to basic and acidic residues. The segment at residues 132-196 (DPKPRRNPRP…NRKSRSKNKL (65 aa)) is a DNA-binding region (homeobox; WUS-type). The segment covering 199 to 210 (GGTGRAGLGLGG) has biased composition (gly residues). Positions 231–242 (FTPPPILPPQPV) are enriched in pro residues. The segment covering 243–270 (QPQQQLVSPVAAPTSLSSSSSDRSSGSS) has biased composition (low complexity).

This sequence belongs to the WUS homeobox family.

Its subcellular location is the nucleus. Transcription factor which may be involved in developmental processes. In Oryza sativa subsp. japonica (Rice), this protein is WUSCHEL-related homeobox 13 (WOX13).